A 195-amino-acid polypeptide reads, in one-letter code: Imidazoleglycerol-phosphate dehydratase (195 aa).

This sequence belongs to the imidazoleglycerol-phosphate dehydratase family.

It is found in the cytoplasm. It catalyses the reaction D-erythro-1-(imidazol-4-yl)glycerol 3-phosphate = 3-(imidazol-4-yl)-2-oxopropyl phosphate + H2O. It participates in amino-acid biosynthesis; L-histidine biosynthesis; L-histidine from 5-phospho-alpha-D-ribose 1-diphosphate: step 6/9. This chain is Imidazoleglycerol-phosphate dehydratase, found in Maridesulfovibrio salexigens (strain ATCC 14822 / DSM 2638 / NCIMB 8403 / VKM B-1763) (Desulfovibrio salexigens).